Here is a 244-residue protein sequence, read N- to C-terminus: Probable transcriptional regulatory protein Aasi_0624 (244 aa).

It belongs to the TACO1 family.

It localises to the cytoplasm. The sequence is that of Probable transcriptional regulatory protein Aasi_0624 from Amoebophilus asiaticus (strain 5a2).